Here is a 576-residue protein sequence, read N- to C-terminus: Tudor and KH domain-containing protein homolog (576 aa).

The tract at residues 40–60 is disordered; sequence EEADSGGQRPASGIRGQTEEQ. KH domains lie at 65–127 and 136–199; these read EVCL…RALL and VVKV…RKML. Basic and acidic residues predominate over residues 209–224; that stretch reads LVRSMEEVEQRREPRR. The disordered stretch occupies residues 209–253; it reads LVRSMEEVEQRREPRRSPTNSIASSMYSSQTSLSSHTQPRDKLMA. Positions 232–243 are enriched in low complexity; that stretch reads SSMYSSQTSLSS. Residues 310–375 enclose the Tudor domain; that stretch reads APYVGQIVAA…CELRTDFLTL (66 aa). The disordered stretch occupies residues 556 to 576; sequence ATDLENGNNNNASTTNGASAH. Low complexity predominate over residues 561-576; sequence NGNNNNASTTNGASAH.

This sequence belongs to the Tdrkh family. Interacts (via C-terminus) with AGO3 (via the N-terminal region when symmetrically methylated on arginine residues); this interaction is RNA-independent and may be required for AGO3 localization to the nuage. Interacts (via Tudor domain) with piwi (via N-terminus). Interacts with tral and me31B. Ovaries (at protein level). Expressed in the ovary and testis.

Its subcellular location is the cytoplasm. It localises to the nucleus. The protein resides in the cytoplasmic ribonucleoprotein granule. Functionally, involved in the piwi-interacting RNA (piRNA) metabolic process, which mediates the repression of transposable elements during meiosis by forming complexes composed of piRNAs and Piwi proteins, and governs the methylation and subsequent repression of transposons which is essential for germline integrity. Likely to act by recruiting Piwi proteins such as AGO3 and piwi to the piRNA biogenesis machinery in the nuage. Required for the final steps of primary piRNA biogenesis by participating in the 3' end-trimming of piwi-bound intermediates into mature piRNAs. This Drosophila melanogaster (Fruit fly) protein is Tudor and KH domain-containing protein homolog.